Here is a 236-residue protein sequence, read N- to C-terminus: MTNTWNRLALLIFAVLSLLVAGELQAGVVVGGTRFIFPADRESISILLTNTSQESWLINSKINRPTRWAGGEASTVPAPLLAAPPLILLKPGTTGTLRLLRTESDILPVDRETLFELSIASVPSGKVENQSVKVAMRSVFKLFWRPEGLPGDPLEAYQQLRWTRNSQGVQLTNPTPYYINLIQVSVNGKALSNVGVVPPKSQRQTSWCQAIAPCHVAWRAINDYGGLSAKKEQNLP.

The N-terminal stretch at 1–26 is a signal peptide; the sequence is MTNTWNRLALLIFAVLSLLVAGELQA.

Belongs to the periplasmic pilus chaperone family.

Its subcellular location is the periplasm. Its function is as follows. Part of the elfADCG-ycbUVF fimbrial operon, which promotes adhesion of bacteria to different abiotic surfaces. Could be required for the biogenesis of fimbriae. This is an uncharacterized protein from Escherichia coli (strain K12).